Consider the following 37-residue polypeptide: Delta-amaurobitoxin-Pl1a (37 aa).

4 cysteine pairs are disulfide-bonded: Cys2–Cys18, Cys9–Cys23, Cys17–Cys33, and Cys25–Cys31. At Ser37 the chain carries Serine amide.

This sequence belongs to the neurotoxin 07 (Beta/delta-agtx) family. 02 (aga-3) subfamily. As to expression, expressed by the venom gland.

It localises to the secreted. Binds at site 4 of sodium channels (Nav) and inhibits the fast inactivation of cockroach channels. This toxin is active only on insects. Has a potent activity against S.litura larvae. This chain is Delta-amaurobitoxin-Pl1a, found in Pireneitega luctuosa (Tangled nest spider).